A 955-amino-acid chain; its full sequence is Leucine--tRNA ligase (955 aa).

Positions 51-61 (PYLNGVLHAGH) match the 'HIGH' region motif. Residues 647–651 (KLSKS) carry the 'KMSKS' region motif. Position 650 (lysine 650) interacts with ATP.

It belongs to the class-I aminoacyl-tRNA synthetase family.

The protein resides in the cytoplasm. It catalyses the reaction tRNA(Leu) + L-leucine + ATP = L-leucyl-tRNA(Leu) + AMP + diphosphate. The chain is Leucine--tRNA ligase from Methanococcus maripaludis (strain DSM 14266 / JCM 13030 / NBRC 101832 / S2 / LL).